Reading from the N-terminus, the 740-residue chain is Polyribonucleotide nucleotidyltransferase (740 aa).

Mg(2+) contacts are provided by aspartate 496 and aspartate 502. Residues 563 to 622 (PAIIRTSIHPDKIRDIIGPGGKIIKKLVEETGADIDIEDDGRVFIAAVDREKGKRALEII) form the KH domain. Residues 632-706 (GKLYNGKVTR…QQGRLKLSKK (75 aa)) form the S1 motif domain. Positions 707 to 740 (EAMRDMGLAPAESTSEQPEKRERRPFSRPKATKE) are disordered. The span at 723 to 740 (QPEKRERRPFSRPKATKE) shows a compositional bias: basic and acidic residues.

It belongs to the polyribonucleotide nucleotidyltransferase family. The cofactor is Mg(2+).

It localises to the cytoplasm. The enzyme catalyses RNA(n+1) + phosphate = RNA(n) + a ribonucleoside 5'-diphosphate. Functionally, involved in mRNA degradation. Catalyzes the phosphorolysis of single-stranded polyribonucleotides processively in the 3'- to 5'-direction. This chain is Polyribonucleotide nucleotidyltransferase, found in Desulforamulus reducens (strain ATCC BAA-1160 / DSM 100696 / MI-1) (Desulfotomaculum reducens).